A 255-amino-acid polypeptide reads, in one-letter code: Imidazole glycerol phosphate synthase subunit HisF (255 aa).

Residues aspartate 12 and aspartate 131 contribute to the active site.

Belongs to the HisA/HisF family. In terms of assembly, heterodimer of HisH and HisF.

It is found in the cytoplasm. The enzyme catalyses 5-[(5-phospho-1-deoxy-D-ribulos-1-ylimino)methylamino]-1-(5-phospho-beta-D-ribosyl)imidazole-4-carboxamide + L-glutamine = D-erythro-1-(imidazol-4-yl)glycerol 3-phosphate + 5-amino-1-(5-phospho-beta-D-ribosyl)imidazole-4-carboxamide + L-glutamate + H(+). It participates in amino-acid biosynthesis; L-histidine biosynthesis; L-histidine from 5-phospho-alpha-D-ribose 1-diphosphate: step 5/9. IGPS catalyzes the conversion of PRFAR and glutamine to IGP, AICAR and glutamate. The HisF subunit catalyzes the cyclization activity that produces IGP and AICAR from PRFAR using the ammonia provided by the HisH subunit. This chain is Imidazole glycerol phosphate synthase subunit HisF, found in Salinispora arenicola (strain CNS-205).